Reading from the N-terminus, the 160-residue chain is Putative UPF0479 protein YIL177W-A (160 aa).

The next 2 helical transmembrane spans lie at 39–59 (IVFC…KVLQ) and 136–156 (VPMI…ISQH).

The protein belongs to the UPF0479 family.

It is found in the membrane. The protein is Putative UPF0479 protein YIL177W-A of Saccharomyces cerevisiae (strain ATCC 204508 / S288c) (Baker's yeast).